A 293-amino-acid chain; its full sequence is 4-hydroxy-tetrahydrodipicolinate synthase (293 aa).

A pyruvate-binding site is contributed by threonine 47. The active-site Proton donor/acceptor is tyrosine 135. The Schiff-base intermediate with substrate role is filled by lysine 164. Isoleucine 206 serves as a coordination point for pyruvate.

It belongs to the DapA family. Homotetramer; dimer of dimers.

Its subcellular location is the cytoplasm. The enzyme catalyses L-aspartate 4-semialdehyde + pyruvate = (2S,4S)-4-hydroxy-2,3,4,5-tetrahydrodipicolinate + H2O + H(+). Its pathway is amino-acid biosynthesis; L-lysine biosynthesis via DAP pathway; (S)-tetrahydrodipicolinate from L-aspartate: step 3/4. Its function is as follows. Catalyzes the condensation of (S)-aspartate-beta-semialdehyde [(S)-ASA] and pyruvate to 4-hydroxy-tetrahydrodipicolinate (HTPA). This chain is 4-hydroxy-tetrahydrodipicolinate synthase, found in Flavobacterium psychrophilum (strain ATCC 49511 / DSM 21280 / CIP 103535 / JIP02/86).